The chain runs to 332 residues: Glyceraldehyde-3-phosphate dehydrogenase 2 (332 aa).

NAD(+) contacts are provided by residues Arg11–Ile12, Asp32, and Arg77. Residues Ser148–Thr150, Thr179, Thr208–Gly209, and Arg231 contribute to the D-glyceraldehyde 3-phosphate site. The active-site Nucleophile is Cys149. Asn313 lines the NAD(+) pocket.

The protein belongs to the glyceraldehyde-3-phosphate dehydrogenase family. As to quaternary structure, homotetramer.

The protein resides in the cytoplasm. The catalysed reaction is D-glyceraldehyde 3-phosphate + phosphate + NAD(+) = (2R)-3-phospho-glyceroyl phosphate + NADH + H(+). It participates in carbohydrate degradation; glycolysis; pyruvate from D-glyceraldehyde 3-phosphate: step 1/5. The protein is Glyceraldehyde-3-phosphate dehydrogenase 2 (Gapdh2) of Drosophila pseudoobscura pseudoobscura (Fruit fly).